The primary structure comprises 66 residues: Large ribosomal subunit protein bL33c (66 aa).

Belongs to the bacterial ribosomal protein bL33 family.

The protein resides in the plastid. The protein localises to the chloroplast. This chain is Large ribosomal subunit protein bL33c, found in Morus indica (Mulberry).